Reading from the N-terminus, the 697-residue chain is Elongation factor G 2 (697 aa).

The tr-type G domain maps to 5 to 280 (SKYRNIGIFA…AVVDYLPAPN (276 aa)). Residues 14–21 (AHVDAGKT), 78–82 (DTPGH), and 132–135 (NKLD) each bind GTP.

It belongs to the TRAFAC class translation factor GTPase superfamily. Classic translation factor GTPase family. EF-G/EF-2 subfamily.

The protein resides in the cytoplasm. Its function is as follows. Catalyzes the GTP-dependent ribosomal translocation step during translation elongation. During this step, the ribosome changes from the pre-translocational (PRE) to the post-translocational (POST) state as the newly formed A-site-bound peptidyl-tRNA and P-site-bound deacylated tRNA move to the P and E sites, respectively. Catalyzes the coordinated movement of the two tRNA molecules, the mRNA and conformational changes in the ribosome. This chain is Elongation factor G 2, found in Shewanella sp. (strain MR-4).